Reading from the N-terminus, the 184-residue chain is UPF0340 protein TTE0860 (184 aa).

The protein belongs to the UPF0340 family.

This Caldanaerobacter subterraneus subsp. tengcongensis (strain DSM 15242 / JCM 11007 / NBRC 100824 / MB4) (Thermoanaerobacter tengcongensis) protein is UPF0340 protein TTE0860.